A 171-amino-acid chain; its full sequence is Ribosome maturation factor RimP (171 aa).

This sequence belongs to the RimP family.

It localises to the cytoplasm. Required for maturation of 30S ribosomal subunits. The protein is Ribosome maturation factor RimP of Anaeromyxobacter sp. (strain Fw109-5).